The chain runs to 492 residues: Glutamyl-tRNA(Gln) amidotransferase subunit A (492 aa).

Active-site charge relay system residues include Lys80 and Ser155. Residue Ser179 is the Acyl-ester intermediate of the active site.

This sequence belongs to the amidase family. GatA subfamily. As to quaternary structure, heterotrimer of A, B and C subunits.

The catalysed reaction is L-glutamyl-tRNA(Gln) + L-glutamine + ATP + H2O = L-glutaminyl-tRNA(Gln) + L-glutamate + ADP + phosphate + H(+). Allows the formation of correctly charged Gln-tRNA(Gln) through the transamidation of misacylated Glu-tRNA(Gln) in organisms which lack glutaminyl-tRNA synthetase. The reaction takes place in the presence of glutamine and ATP through an activated gamma-phospho-Glu-tRNA(Gln). The chain is Glutamyl-tRNA(Gln) amidotransferase subunit A from Mycobacteroides abscessus (strain ATCC 19977 / DSM 44196 / CCUG 20993 / CIP 104536 / JCM 13569 / NCTC 13031 / TMC 1543 / L948) (Mycobacterium abscessus).